Reading from the N-terminus, the 174-residue chain is Type II secretion system protein M (174 aa).

The Cytoplasmic segment spans residues 1–32 (MKVMTQFHERLRAQAETSQLAIRWRGLPARDR). A helical transmembrane segment spans residues 33–52 (LALLWLGAFLLLVVLYLALW). Residues 53–174 (RPAERHLQSA…VSARLSLRVE (122 aa)) lie on the Periplasmic side of the membrane.

This sequence belongs to the GSP M family. In terms of assembly, type II secretion system is composed of four main components: the outer membrane complex, the inner membrane complex, the cytoplasmic secretion ATPase and the periplasm-spanning pseudopilus. Forms homodimers. Interacts with XcpY/GspL. Interacts with XcpR/GspE and XcpS/GspF.

It is found in the cell inner membrane. Inner membrane component of the type II secretion system required for the energy-dependent secretion of extracellular factors such as proteases and toxins from the periplasm. Plays a role in the complex assembly and recruits XcpY resulting in a stable complex in the inner membrane. Provides thus a link between the energy-providing XcpR protein in the cytoplasm and the rest of the T2SS machinery. This chain is Type II secretion system protein M (xcpZ), found in Pseudomonas aeruginosa (strain ATCC 15692 / DSM 22644 / CIP 104116 / JCM 14847 / LMG 12228 / 1C / PRS 101 / PAO1).